A 206-amino-acid chain; its full sequence is Small ribosomal subunit protein uS4 (206 aa).

The region spanning 96-157 (SRLDNVVYRM…KAKNQARIQN (62 aa)) is the S4 RNA-binding domain.

Belongs to the universal ribosomal protein uS4 family. Part of the 30S ribosomal subunit. Contacts protein S5. The interaction surface between S4 and S5 is involved in control of translational fidelity.

One of the primary rRNA binding proteins, it binds directly to 16S rRNA where it nucleates assembly of the body of the 30S subunit. Functionally, with S5 and S12 plays an important role in translational accuracy. The protein is Small ribosomal subunit protein uS4 of Chromohalobacter salexigens (strain ATCC BAA-138 / DSM 3043 / CIP 106854 / NCIMB 13768 / 1H11).